The chain runs to 509 residues: Glycogen synthase (509 aa).

Lysine 47 is an ADP-alpha-D-glucose binding site.

The protein belongs to the glycosyltransferase 1 family. Bacterial/plant glycogen synthase subfamily.

It carries out the reaction [(1-&gt;4)-alpha-D-glucosyl](n) + ADP-alpha-D-glucose = [(1-&gt;4)-alpha-D-glucosyl](n+1) + ADP + H(+). It participates in glycan biosynthesis; glycogen biosynthesis. Functionally, synthesizes alpha-1,4-glucan chains using ADP-glucose. The polypeptide is Glycogen synthase (Xanthomonas oryzae pv. oryzae (strain PXO99A)).